We begin with the raw amino-acid sequence, 466 residues long: 3-isopropylmalate dehydratase large subunit (466 aa).

[4Fe-4S] cluster contacts are provided by cysteine 347, cysteine 407, and cysteine 410.

The protein belongs to the aconitase/IPM isomerase family. LeuC type 1 subfamily. As to quaternary structure, heterodimer of LeuC and LeuD. [4Fe-4S] cluster is required as a cofactor.

It carries out the reaction (2R,3S)-3-isopropylmalate = (2S)-2-isopropylmalate. It functions in the pathway amino-acid biosynthesis; L-leucine biosynthesis; L-leucine from 3-methyl-2-oxobutanoate: step 2/4. Catalyzes the isomerization between 2-isopropylmalate and 3-isopropylmalate, via the formation of 2-isopropylmaleate. In Vibrio campbellii (strain ATCC BAA-1116), this protein is 3-isopropylmalate dehydratase large subunit.